The primary structure comprises 540 residues: Glucose-6-phosphate isomerase (540 aa).

Catalysis depends on E350, which acts as the Proton donor. Active-site residues include H381 and K503.

The protein belongs to the GPI family.

Its subcellular location is the cytoplasm. The enzyme catalyses alpha-D-glucose 6-phosphate = beta-D-fructose 6-phosphate. Its pathway is carbohydrate biosynthesis; gluconeogenesis. It functions in the pathway carbohydrate degradation; glycolysis; D-glyceraldehyde 3-phosphate and glycerone phosphate from D-glucose: step 2/4. Catalyzes the reversible isomerization of glucose-6-phosphate to fructose-6-phosphate. In Burkholderia lata (strain ATCC 17760 / DSM 23089 / LMG 22485 / NCIMB 9086 / R18194 / 383), this protein is Glucose-6-phosphate isomerase.